The chain runs to 389 residues: Histidinol-phosphate aminotransferase (389 aa).

At Lys-233 the chain carries N6-(pyridoxal phosphate)lysine.

This sequence belongs to the class-II pyridoxal-phosphate-dependent aminotransferase family. The cofactor is pyridoxal 5'-phosphate.

It catalyses the reaction L-histidinol phosphate + 2-oxoglutarate = 3-(imidazol-4-yl)-2-oxopropyl phosphate + L-glutamate. The protein operates within amino-acid biosynthesis; L-histidine biosynthesis; L-histidine from 5-phospho-alpha-D-ribose 1-diphosphate: step 7/9. This is Histidinol-phosphate aminotransferase (HIS5) from Candida maltosa (Yeast).